We begin with the raw amino-acid sequence, 359 residues long: Membrane-bound lytic murein transglycosylase C (359 aa).

A signal peptide spans 1–16 (MKKVLALALIAPLLIS). Residue Cys17 is the site of N-palmitoyl cysteine attachment. Cys17 is lipidated: S-diacylglycerol cysteine.

It belongs to the transglycosylase Slt family.

Its subcellular location is the cell outer membrane. It carries out the reaction Exolytic cleavage of the (1-&gt;4)-beta-glycosidic linkage between N-acetylmuramic acid (MurNAc) and N-acetylglucosamine (GlcNAc) residues in peptidoglycan, from either the reducing or the non-reducing ends of the peptidoglycan chains, with concomitant formation of a 1,6-anhydrobond in the MurNAc residue.. Its function is as follows. Murein-degrading enzyme. May play a role in recycling of muropeptides during cell elongation and/or cell division. This Edwardsiella ictaluri (strain 93-146) protein is Membrane-bound lytic murein transglycosylase C.